Reading from the N-terminus, the 253-residue chain is Imidazole glycerol phosphate synthase subunit HisF (253 aa).

Residues Asp-11 and Asp-130 contribute to the active site.

This sequence belongs to the HisA/HisF family. Heterodimer of HisH and HisF.

It is found in the cytoplasm. It carries out the reaction 5-[(5-phospho-1-deoxy-D-ribulos-1-ylimino)methylamino]-1-(5-phospho-beta-D-ribosyl)imidazole-4-carboxamide + L-glutamine = D-erythro-1-(imidazol-4-yl)glycerol 3-phosphate + 5-amino-1-(5-phospho-beta-D-ribosyl)imidazole-4-carboxamide + L-glutamate + H(+). It functions in the pathway amino-acid biosynthesis; L-histidine biosynthesis; L-histidine from 5-phospho-alpha-D-ribose 1-diphosphate: step 5/9. IGPS catalyzes the conversion of PRFAR and glutamine to IGP, AICAR and glutamate. The HisF subunit catalyzes the cyclization activity that produces IGP and AICAR from PRFAR using the ammonia provided by the HisH subunit. This Cereibacter sphaeroides (strain ATCC 17029 / ATH 2.4.9) (Rhodobacter sphaeroides) protein is Imidazole glycerol phosphate synthase subunit HisF.